A 497-amino-acid chain; its full sequence is Galactose-1-phosphate uridylyltransferase (497 aa).

This sequence belongs to the galactose-1-phosphate uridylyltransferase type 2 family.

The protein resides in the cytoplasm. The enzyme catalyses alpha-D-galactose 1-phosphate + UDP-alpha-D-glucose = alpha-D-glucose 1-phosphate + UDP-alpha-D-galactose. The protein operates within carbohydrate metabolism; galactose metabolism. The sequence is that of Galactose-1-phosphate uridylyltransferase from Clostridium acetobutylicum (strain ATCC 824 / DSM 792 / JCM 1419 / IAM 19013 / LMG 5710 / NBRC 13948 / NRRL B-527 / VKM B-1787 / 2291 / W).